The following is a 147-amino-acid chain: Deoxyuridine 5'-triphosphate nucleotidohydrolase (147 aa).

Substrate is bound by residues 67–69 (RSG), Asn80, and 84–86 (TID).

This sequence belongs to the dUTPase family. Mg(2+) is required as a cofactor.

The enzyme catalyses dUTP + H2O = dUMP + diphosphate + H(+). Its pathway is pyrimidine metabolism; dUMP biosynthesis; dUMP from dCTP (dUTP route): step 2/2. Functionally, this enzyme is involved in nucleotide metabolism: it produces dUMP, the immediate precursor of thymidine nucleotides and it decreases the intracellular concentration of dUTP so that uracil cannot be incorporated into DNA. The polypeptide is Deoxyuridine 5'-triphosphate nucleotidohydrolase (Anaeromyxobacter dehalogenans (strain 2CP-1 / ATCC BAA-258)).